A 797-amino-acid chain; its full sequence is Calcium-transporting ATPase CtpE (797 aa).

3 consecutive transmembrane segments (helical) span residues 55-75, 215-235, and 254-274; these read LLLIVLATGSLINGMFGLLII, ILQFITYLLVPAGLLTIYTQL, and VPMVPEGLVLMTSIAFAVGVV. The active-site 4-aspartylphosphate intermediate is the Asp-301. 3 residues coordinate Mg(2+): Asp-301, Thr-303, and Asp-536. 6 helical membrane passes run 601-621, 633-653, 667-687, 703-723, 729-749, and 764-784; these read TVYSVLLALLVGIECLIAIPL, IHVTIAAWFTIGIPAFILSLA, VMTSAVPFGLVIGVATFVTYL, ASTAALITLLMTALWVLAVIA, WRLALVLPSGLAYVVIFSLPL, and TSIALAVGVVGAATIEAMWWI.

Belongs to the cation transport ATPase (P-type) (TC 3.A.3) family.

The protein localises to the cell membrane. The enzyme catalyses Ca(2+)(in) + ATP + H2O = Ca(2+)(out) + ADP + phosphate + H(+). Its function is as follows. P-type ATPase involved in specific uptake of calcium. In Mycobacterium tuberculosis (strain CDC 1551 / Oshkosh), this protein is Calcium-transporting ATPase CtpE (ctpE).